A 336-amino-acid polypeptide reads, in one-letter code: Ferredoxin--NADP reductase (336 aa).

Positions 34, 42, 47, 87, 121, 286, and 326 each coordinate FAD.

The protein belongs to the ferredoxin--NADP reductase type 2 family. As to quaternary structure, homodimer. FAD is required as a cofactor.

It carries out the reaction 2 reduced [2Fe-2S]-[ferredoxin] + NADP(+) + H(+) = 2 oxidized [2Fe-2S]-[ferredoxin] + NADPH. The protein is Ferredoxin--NADP reductase of Leuconostoc mesenteroides subsp. mesenteroides (strain ATCC 8293 / DSM 20343 / BCRC 11652 / CCM 1803 / JCM 6124 / NCDO 523 / NBRC 100496 / NCIMB 8023 / NCTC 12954 / NRRL B-1118 / 37Y).